Reading from the N-terminus, the 506-residue chain is Tetratricopeptide repeat protein 8 (506 aa).

The interval 83–112 (RPGTSFARPKTSAKGVNPILRPTTNAGRPL) is disordered. TPR repeat units lie at residues 217 to 250 (YYWK…KKLI), 251 to 283 (ETFA…FPEN), 284 to 317 (VTML…ESNN), 319 to 351 (EAIA…GVSS), 353 to 385 (ELFL…MTDD), 388 to 421 (ADVW…DPDH), 423 to 455 (ESLV…NPYM), and 456 to 489 (FEGN…FPEH).

Part of BBSome complex, that contains at least bbs-1, bbs-2, bbs-4, bbs-5, osm-12, bbs-8/ttc-8 and bbs-9. Expressed in head and tail neurons. Expressed in ciliated male tail-neurons. Expressed in thermosensory and CO(2) sensory AFD neurons.

The protein resides in the cell projection. The protein localises to the cilium. It is found in the cytoplasm. It localises to the cytoskeleton. Its subcellular location is the cilium basal body. The protein resides in the cilium axoneme. In terms of biological role, component of the BBSome complex. The BBSome complex is thought to function as a coat complex required for sorting of specific membrane proteins to the primary cilia. The BBSome complex is required for ciliogenesis but is dispensable for centriolar satellite function. Required for proper BBSome complex assembly and its ciliary localization. Required for cilia biogenesis and both the assembly and movement of intraflagellar transport proteins along the ciliary axoneme. Plays a role in guanylyl cyclase localization in the ring-like structures at the base of the finger compartment in AFD sensory neurons. The chain is Tetratricopeptide repeat protein 8 from Caenorhabditis elegans.